Reading from the N-terminus, the 387-residue chain is 1-deoxy-D-xylulose 5-phosphate reductoisomerase (387 aa).

Residues threonine 10, glycine 11, isoleucine 13, asparagine 38, and asparagine 122 each contribute to the NADPH site. Lysine 123 contacts 1-deoxy-D-xylulose 5-phosphate. Glutamate 124 is an NADPH binding site. Aspartate 148 contacts Mn(2+). 1-deoxy-D-xylulose 5-phosphate-binding residues include serine 149, glutamate 150, serine 174, and histidine 197. Residue glutamate 150 coordinates Mn(2+). Position 203 (glycine 203) interacts with NADPH. 1-deoxy-D-xylulose 5-phosphate contacts are provided by serine 210, asparagine 215, lysine 216, and glutamate 219. Glutamate 219 is a binding site for Mn(2+).

Belongs to the DXR family. Requires Mg(2+) as cofactor. Mn(2+) is required as a cofactor.

The catalysed reaction is 2-C-methyl-D-erythritol 4-phosphate + NADP(+) = 1-deoxy-D-xylulose 5-phosphate + NADPH + H(+). The protein operates within isoprenoid biosynthesis; isopentenyl diphosphate biosynthesis via DXP pathway; isopentenyl diphosphate from 1-deoxy-D-xylulose 5-phosphate: step 1/6. Catalyzes the NADPH-dependent rearrangement and reduction of 1-deoxy-D-xylulose-5-phosphate (DXP) to 2-C-methyl-D-erythritol 4-phosphate (MEP). The sequence is that of 1-deoxy-D-xylulose 5-phosphate reductoisomerase from Ehrlichia ruminantium (strain Gardel).